The chain runs to 368 residues: Phospho-N-acetylmuramoyl-pentapeptide-transferase (368 aa).

9 consecutive transmembrane segments (helical) span residues 23–43 (YLTF…IFAG), 72–92 (VPTM…FLWA), 98–118 (HVWL…IDDY), 139–159 (VTLG…SVLL), 170–190 (LSVD…TAVS), 201–221 (GLAA…AYLC), 238–258 (AGEV…FLWF), 281–301 (VIAL…VFFV), and 345–365 (KIVI…LMTL).

It belongs to the glycosyltransferase 4 family. MraY subfamily. The cofactor is Mg(2+).

The protein localises to the cell inner membrane. It carries out the reaction UDP-N-acetyl-alpha-D-muramoyl-L-alanyl-gamma-D-glutamyl-meso-2,6-diaminopimeloyl-D-alanyl-D-alanine + di-trans,octa-cis-undecaprenyl phosphate = di-trans,octa-cis-undecaprenyl diphospho-N-acetyl-alpha-D-muramoyl-L-alanyl-D-glutamyl-meso-2,6-diaminopimeloyl-D-alanyl-D-alanine + UMP. The protein operates within cell wall biogenesis; peptidoglycan biosynthesis. Its function is as follows. Catalyzes the initial step of the lipid cycle reactions in the biosynthesis of the cell wall peptidoglycan: transfers peptidoglycan precursor phospho-MurNAc-pentapeptide from UDP-MurNAc-pentapeptide onto the lipid carrier undecaprenyl phosphate, yielding undecaprenyl-pyrophosphoryl-MurNAc-pentapeptide, known as lipid I. In Chlorobaculum tepidum (strain ATCC 49652 / DSM 12025 / NBRC 103806 / TLS) (Chlorobium tepidum), this protein is Phospho-N-acetylmuramoyl-pentapeptide-transferase.